Consider the following 273-residue polypeptide: Outer surface protein A (273 aa).

Residues 1 to 16 (MKKYLLGIGLILALIA) form the signal peptide. Cys17 is lipidated: N-palmitoyl cysteine. Cys17 is lipidated: S-diacylglycerol cysteine.

It belongs to the OspA lipoprotein family.

The protein localises to the cell outer membrane. It localises to the cell surface. The sequence is that of Outer surface protein A from Borreliella burgdorferi (Lyme disease spirochete).